A 416-amino-acid polypeptide reads, in one-letter code: Putative serine protease HhoB (416 aa).

The first 25 residues, 1–25 (MAIHLKASHLGVAVLLLLFGGAIGA), serve as a signal peptide directing secretion. The span at 35–53 (GQNHSSPDSPVNTSPQSLT) shows a compositional bias: polar residues. The interval 35 to 57 (GQNHSSPDSPVNTSPQSLTPAPV) is disordered. The PDZ domain maps to 320–398 (EMTKQLRTSG…PLAIAVKRGQ (79 aa)).

Belongs to the peptidase S1C family.

Functionally, a putative protease, its function overlaps that of the related putative proteases HtrA and HhoA. The protein is Putative serine protease HhoB (hhoB) of Synechocystis sp. (strain ATCC 27184 / PCC 6803 / Kazusa).